The following is a 454-amino-acid chain: MTKYFGTDGVRGIANKELSPEMAFRLGRTGGYVLTQHKEDASRRPLVLVARDTRISGQMLADALIAGLLSVGIEVLDLGVITTPAVAYLIKIQGADAGIQISASHNPVADNGIKFFGADGYKLSDDTEEEIEALLDAPEDKLPRPAAEGLGTVDDYPEGALKYTQFLEQTLADDLSGIHVCLDGANGATSGLVSRIFADLETDFDTMAISPDGLNINANVGSTHPQALSKFVVEKGADVGLAFDGDGDRCIAVDEQGNIVDGDKIMFILGSYMKSQGRLKQDTVVTTVMSNLGLYKALEANGMKSVQTAVGDRHVVEAMRKDGYNIGGEQSGHVILFDYHNTGDGMLTGIHLLNVMKKTGKKLSELAAPVQDYPQKLVNVKVADKENWQAYPEIQSAIDTVEKEMAGDGRVLVRPSGTEPLLRVMAEAKTEDLVSRYVDQIVDVVKQEMGSKED.

The Phosphoserine intermediate role is filled by Ser104. Residues Ser104, Asp244, Asp246, and Asp248 each coordinate Mg(2+). Ser104 is modified (phosphoserine).

It belongs to the phosphohexose mutase family. Mg(2+) serves as cofactor. Activated by phosphorylation.

The catalysed reaction is alpha-D-glucosamine 1-phosphate = D-glucosamine 6-phosphate. Functionally, catalyzes the conversion of glucosamine-6-phosphate to glucosamine-1-phosphate. This Lacticaseibacillus paracasei (strain ATCC 334 / BCRC 17002 / CCUG 31169 / CIP 107868 / KCTC 3260 / NRRL B-441) (Lactobacillus paracasei) protein is Phosphoglucosamine mutase.